Reading from the N-terminus, the 292-residue chain is Elongation factor Ts (292 aa).

The involved in Mg(2+) ion dislocation from EF-Tu stretch occupies residues 79–82 (TDFV).

Belongs to the EF-Ts family.

The protein localises to the cytoplasm. Functionally, associates with the EF-Tu.GDP complex and induces the exchange of GDP to GTP. It remains bound to the aminoacyl-tRNA.EF-Tu.GTP complex up to the GTP hydrolysis stage on the ribosome. The chain is Elongation factor Ts from Xanthomonas campestris pv. campestris (strain ATCC 33913 / DSM 3586 / NCPPB 528 / LMG 568 / P 25).